Here is a 362-residue protein sequence, read N- to C-terminus: UDP-arabinopyranose mutase 3 (362 aa).

Positions 106-108 (DDD) match the DXD motif motif. A glycan (N-linked (Glc...) arginine) is linked at Arg154.

This sequence belongs to the RGP family. In terms of assembly, heterodimer with RGP1. It depends on Mn(2+) as a cofactor. Mg(2+) serves as cofactor. Post-translationally, reversibly glycosylated in vitro by UDP-glucose, UDP-xylose and UDP-galactose, but not UDP-mannose. In terms of tissue distribution, specifically expressed in developing seeds.

It is found in the cytoplasm. The protein resides in the cytosol. The protein localises to the golgi apparatus. The enzyme catalyses UDP-beta-L-arabinofuranose = UDP-beta-L-arabinopyranose. Functionally, UDP-L-arabinose mutase involved in the biosynthesis of cell wall non-cellulosic polysaccharides. Catalyzes the interconvertion of UDP-L-arabinopyranose (UDP-Arap) and UDP-L-arabinofuranose (UDP-Araf). Preferentially catalyzes the formation of UDP-Arap from UDP-Araf. At thermodynamic equilibrium in vitro the ratio of the pyranose form over the furanose form is 95:5. Is not active on other UDP-sugars (UDP-Gal, UDP-Xyl, UDP-Glc, GDP-Man and GDP-Fuc). Is probably active as heteromer in vivo. In Arabidopsis thaliana (Mouse-ear cress), this protein is UDP-arabinopyranose mutase 3.